A 445-amino-acid chain; its full sequence is Glucose-6-phosphate isomerase 2 (445 aa).

Glu285 acts as the Proton donor in catalysis. Residues His306 and Lys420 contribute to the active site.

Belongs to the GPI family. Homodimer.

It localises to the cytoplasm. The enzyme catalyses alpha-D-glucose 6-phosphate = beta-D-fructose 6-phosphate. It participates in carbohydrate biosynthesis; gluconeogenesis. It functions in the pathway carbohydrate degradation; glycolysis; D-glyceraldehyde 3-phosphate and glycerone phosphate from D-glucose: step 2/4. Catalyzes the reversible isomerization of glucose-6-phosphate to fructose-6-phosphate. The chain is Glucose-6-phosphate isomerase 2 from Geobacillus stearothermophilus (Bacillus stearothermophilus).